Reading from the N-terminus, the 193-residue chain is Putative anthranilate synthase component II (193 aa).

Positions 2–193 constitute a Glutamine amidotransferase type-1 domain; the sequence is KLLIINNHDS…WLAIPPTTNP (192 aa). Catalysis depends on residues Cys78, His168, and Glu170.

Tetramer of two components I and two components II.

The catalysed reaction is chorismate + L-glutamine = anthranilate + pyruvate + L-glutamate + H(+). Its pathway is amino-acid biosynthesis; L-tryptophan biosynthesis; L-tryptophan from chorismate: step 1/5. This chain is Putative anthranilate synthase component II, found in Haemophilus influenzae (strain ATCC 51907 / DSM 11121 / KW20 / Rd).